A 526-amino-acid chain; its full sequence is 3',5'-cyclic-nucleotide phosphodiesterase 2 (526 aa).

Residues 182 to 526 (RNIEFMSFLS…EYWMKHKKPQ (345 aa)) enclose the PDEase domain. His-265 serves as the catalytic Proton donor. Residues His-269, His-302, Asp-303, and Asp-400 each coordinate a divalent metal cation.

This sequence belongs to the cyclic nucleotide phosphodiesterase family. Monomer. Requires a divalent metal cation as cofactor.

It catalyses the reaction 3',5'-cyclic AMP + H2O = AMP + H(+). In terms of biological role, controls the level of cAMP in yeast cells, together with the low-affinity cAMP phosphodiesterase (PDE1). The sequence is that of 3',5'-cyclic-nucleotide phosphodiesterase 2 from Saccharomyces cerevisiae (strain ATCC 204508 / S288c) (Baker's yeast).